A 156-amino-acid chain; its full sequence is Small ribosomal subunit protein uS7 (156 aa).

Belongs to the universal ribosomal protein uS7 family. As to quaternary structure, part of the 30S ribosomal subunit. Contacts proteins S9 and S11.

Functionally, one of the primary rRNA binding proteins, it binds directly to 16S rRNA where it nucleates assembly of the head domain of the 30S subunit. Is located at the subunit interface close to the decoding center, probably blocks exit of the E-site tRNA. This Tropheryma whipplei (strain TW08/27) (Whipple's bacillus) protein is Small ribosomal subunit protein uS7.